The primary structure comprises 77 residues: PTS system N-acetylglucosamine-specific EIIB component (77 aa).

The 76-residue stretch at 2-77 (ASKAEKIVAG…PIAAEIEDMM (76 aa)) folds into the PTS EIIB type-1 domain. The active-site Phosphocysteine intermediate; for EIIB activity is the Cys24.

It carries out the reaction N(pros)-phospho-L-histidyl-[protein] + N-acetyl-D-glucosamine(out) = N-acetyl-D-glucosamine 6-phosphate(in) + L-histidyl-[protein]. In terms of biological role, the phosphoenolpyruvate-dependent sugar phosphotransferase system (sugar PTS), a major carbohydrate active transport system, catalyzes the phosphorylation of incoming sugar substrates concomitantly with their translocation across the cell membrane. This system is involved in N-acetylglucosamine (GlcNAc) transport. This Streptomyces coelicolor (strain ATCC BAA-471 / A3(2) / M145) protein is PTS system N-acetylglucosamine-specific EIIB component.